Reading from the N-terminus, the 350-residue chain is Galactokinase (350 aa).

Substrate is bound at residue 14–17 (EHTD). ATP is bound by residues S46 and 98–104 (GSGLSSS). The Mg(2+) site is built by S104 and E136. D148 (proton acceptor) is an active-site residue. Y197 lines the substrate pocket.

The protein belongs to the GHMP kinase family. GalK subfamily.

Its subcellular location is the cytoplasm. The enzyme catalyses alpha-D-galactose + ATP = alpha-D-galactose 1-phosphate + ADP + H(+). It functions in the pathway carbohydrate metabolism; galactose metabolism. Its function is as follows. Catalyzes the transfer of the gamma-phosphate of ATP to D-galactose to form alpha-D-galactose-1-phosphate (Gal-1-P). This Thermococcus kodakarensis (strain ATCC BAA-918 / JCM 12380 / KOD1) (Pyrococcus kodakaraensis (strain KOD1)) protein is Galactokinase.